Reading from the N-terminus, the 348-residue chain is Selenide, water dikinase (348 aa).

Cys17 is a catalytic residue. ATP contacts are provided by residues Lys20 and 48 to 50 (TRD). Residue Asp51 participates in Mg(2+) binding. Residues Asp68, Asp91, and 139–141 (GHS) each bind ATP. A Mg(2+)-binding site is contributed by Asp91. Asp227 contacts Mg(2+).

The protein belongs to the selenophosphate synthase 1 family. Class I subfamily. Homodimer. The cofactor is Mg(2+).

It carries out the reaction hydrogenselenide + ATP + H2O = selenophosphate + AMP + phosphate + 2 H(+). Functionally, synthesizes selenophosphate from selenide and ATP. In Yersinia pestis, this protein is Selenide, water dikinase.